Reading from the N-terminus, the 292-residue chain is Ribosomal RNA small subunit methyltransferase I (292 aa).

The protein belongs to the methyltransferase superfamily. RsmI family.

The protein resides in the cytoplasm. It catalyses the reaction cytidine(1402) in 16S rRNA + S-adenosyl-L-methionine = 2'-O-methylcytidine(1402) in 16S rRNA + S-adenosyl-L-homocysteine + H(+). In terms of biological role, catalyzes the 2'-O-methylation of the ribose of cytidine 1402 (C1402) in 16S rRNA. In Buchnera aphidicola subsp. Baizongia pistaciae (strain Bp), this protein is Ribosomal RNA small subunit methyltransferase I.